Reading from the N-terminus, the 78-residue chain is uncharacterized protein (78 aa).

Residues 49-78 (QRASLERSNSIRNLQSQGKRRSDSKESRKL) form a disordered region. Residues 54–65 (ERSNSIRNLQSQ) are compositionally biased toward polar residues. Over residues 68–78 (RRSDSKESRKL) the composition is skewed to basic and acidic residues.

This is an uncharacterized protein from Saccharomyces cerevisiae (strain ATCC 204508 / S288c) (Baker's yeast).